Reading from the N-terminus, the 699-residue chain is MSAQGDCEFLVQRAREWLITARSLYPADFNIQYEMYTIERNAERTATAGRLLYDMFVNFPDQPVVWREISIIISALRNDSQDKQTQFLRSLFETLPGRVQCEMLLKVTEQCFNTLERSEMLLLLLRRFPETVVQHGVGLGEALLEAETIEEQESPVNCFRKLFVCDVLPLIINNHDVRLPANLLYKYLNKAAEFYINYVTRSTQTENQHQGAQDTSDLMSPSKRSSQKYIIEGLTEKSSQIVDPWERLFKILNVVGMRCEWQMDKGRRSYGDILHRMKDLCRYMNNFDSEAHAKYKNQVVYSTMLVFFKNAFQYVNSIQPSLFQGPNAPSQVPLVLLEDVSNVYGDVEIDRNKHIHKKRKLAEGREKTMSPDDEDCSAKGRNRHIVVNKAELANSIEVLESFKLARESWELLYSLEFLDKEFTRICLAWKTDTWLWLRIFLTDMIIYQGQYKKAIASLHHLAALQGSISQPQITGQGTLEHQRALIQLATCHFALGEYRMTCEKVLDLMCYMVLPIQDGGKSQEEPSKVKPKFRKGSDLKLLPCTSKAIMPYCLHLMLACFKLRAFTDNRDDMALGHVIVLLQQEWPRGENLFLKAVNKICQQGNFQYENFFNYVTNIDMLEEFAYLRTQEGGKIHLELLPNQGMLIKHHTVTRGITKGVKEDFRLAMERQVSRCGENLMVVLHRFCINEKILLLQTLT.

Ser-220 and Ser-370 each carry phosphoserine. Lys-453 is covalently cross-linked (Glycyl lysine isopeptide (Lys-Gly) (interchain with G-Cter in SUMO2)).

Belongs to the Integrator subunit 10 family. In terms of assembly, component of the Integrator complex, composed of core subunits INTS1, INTS2, INTS3, INTS4, INTS5, INTS6, INTS7, INTS8, INTS9/RC74, INTS10, INTS11/CPSF3L, INTS12, INTS13, INTS14 and INTS15. The core complex associates with protein phosphatase 2A subunits PPP2CA and PPP2R1A, to form the Integrator-PP2A (INTAC) complex. INTS10 is part of the tail subcomplex, composed of INTS10, INTS13, INTS14 and INTS15.

It localises to the nucleus. In terms of biological role, component of the integrator complex, a multiprotein complex that terminates RNA polymerase II (Pol II) transcription in the promoter-proximal region of genes. The integrator complex provides a quality checkpoint during transcription elongation by driving premature transcription termination of transcripts that are unfavorably configured for transcriptional elongation: the complex terminates transcription by (1) catalyzing dephosphorylation of the C-terminal domain (CTD) of Pol II subunit POLR2A/RPB1 and SUPT5H/SPT5, (2) degrading the exiting nascent RNA transcript via endonuclease activity and (3) promoting the release of Pol II from bound DNA. The integrator complex is also involved in terminating the synthesis of non-coding Pol II transcripts, such as enhancer RNAs (eRNAs), small nuclear RNAs (snRNAs), telomerase RNAs and long non-coding RNAs (lncRNAs). Within the integrator complex, INTS10 is part of the integrator tail module that acts as a platform for the recruitment of transcription factors at promoters. May be not involved in the recruitment of cytoplasmic dynein to the nuclear envelope, probably as component of the integrator complex. The polypeptide is Integrator complex subunit 10 (INTS10) (Macaca fascicularis (Crab-eating macaque)).